Here is a 334-residue protein sequence, read N- to C-terminus: MTHKISVLHQDKKFDFSLRPKKLTEFCGQKQLKERLDLFLRAAVQRNEVPGHCLFYGPPGLGKTSLAHIMANTIGKGLVIASGPQLLKPSDLIGLLTGLQEGDIFFIDEIHRMGKAAEEYLYPAMEDFKVDITLDSGPGARSVRLDLAPFTLVGATTRAGMLSEPLRTRFAFTGRVDYYTDEDLVSILSRSSQLLAIEANQETLLEIARRARGTPRLANNLLRWVRDFAQMREGNCINSAVAEKALAMLLIDNLGLNEIDIKLLSVMIDFYQGGPVGMKTLAMAVGEDVRTLEDMYEPFLILKGLVQRTARGRVATPLAYEHLNRNPKDRWGEE.

Residues 1–179 (MTHKISVLHQ…FAFTGRVDYY (179 aa)) form a large ATPase domain (RuvB-L) region. ATP contacts are provided by residues L18, R19, G60, K63, T64, S65, 126–128 (EDF), R169, Y179, and R216. T64 contacts Mg(2+). A small ATPAse domain (RuvB-S) region spans residues 180 to 250 (TDEDLVSILS…VAEKALAMLL (71 aa)). Residues 253-334 (NLGLNEIDIK…RNPKDRWGEE (82 aa)) form a head domain (RuvB-H) region. The DNA site is built by R308 and R313.

This sequence belongs to the RuvB family. Homohexamer. Forms an RuvA(8)-RuvB(12)-Holliday junction (HJ) complex. HJ DNA is sandwiched between 2 RuvA tetramers; dsDNA enters through RuvA and exits via RuvB. An RuvB hexamer assembles on each DNA strand where it exits the tetramer. Each RuvB hexamer is contacted by two RuvA subunits (via domain III) on 2 adjacent RuvB subunits; this complex drives branch migration. In the full resolvosome a probable DNA-RuvA(4)-RuvB(12)-RuvC(2) complex forms which resolves the HJ.

Its subcellular location is the cytoplasm. The enzyme catalyses ATP + H2O = ADP + phosphate + H(+). The RuvA-RuvB-RuvC complex processes Holliday junction (HJ) DNA during genetic recombination and DNA repair, while the RuvA-RuvB complex plays an important role in the rescue of blocked DNA replication forks via replication fork reversal (RFR). RuvA specifically binds to HJ cruciform DNA, conferring on it an open structure. The RuvB hexamer acts as an ATP-dependent pump, pulling dsDNA into and through the RuvAB complex. RuvB forms 2 homohexamers on either side of HJ DNA bound by 1 or 2 RuvA tetramers; 4 subunits per hexamer contact DNA at a time. Coordinated motions by a converter formed by DNA-disengaged RuvB subunits stimulates ATP hydrolysis and nucleotide exchange. Immobilization of the converter enables RuvB to convert the ATP-contained energy into a lever motion, pulling 2 nucleotides of DNA out of the RuvA tetramer per ATP hydrolyzed, thus driving DNA branch migration. The RuvB motors rotate together with the DNA substrate, which together with the progressing nucleotide cycle form the mechanistic basis for DNA recombination by continuous HJ branch migration. Branch migration allows RuvC to scan DNA until it finds its consensus sequence, where it cleaves and resolves cruciform DNA. This is Holliday junction branch migration complex subunit RuvB from Chlamydia trachomatis serovar L2 (strain ATCC VR-902B / DSM 19102 / 434/Bu).